We begin with the raw amino-acid sequence, 259 residues long: MLAKRIIPCLDVTGGRVVKGVNFVELRDAGDPVEIAARYNDQGADELTFLDITATSDGRDLILHIIEAVASQVFIPLTVGGGVRTVEDVRRLLNAGADKTSFNSAALANPQVITDASAKYGAQCIVVAIDAKRRSDEDALLRGAGWDVYSHGGRKNTGLDAVAWAVEMAQRGAGEILLTSMNRDGTKSGFDLELTRAVSDAVSVPVIASGGVGNLDHLADGVQLGGADAVLAASIFHYGEYTVAQAKRHMASRGIPVRL.

Residues Asp-11 and Asp-130 contribute to the active site.

This sequence belongs to the HisA/HisF family. As to quaternary structure, heterodimer of HisH and HisF.

The protein resides in the cytoplasm. It carries out the reaction 5-[(5-phospho-1-deoxy-D-ribulos-1-ylimino)methylamino]-1-(5-phospho-beta-D-ribosyl)imidazole-4-carboxamide + L-glutamine = D-erythro-1-(imidazol-4-yl)glycerol 3-phosphate + 5-amino-1-(5-phospho-beta-D-ribosyl)imidazole-4-carboxamide + L-glutamate + H(+). It participates in amino-acid biosynthesis; L-histidine biosynthesis; L-histidine from 5-phospho-alpha-D-ribose 1-diphosphate: step 5/9. IGPS catalyzes the conversion of PRFAR and glutamine to IGP, AICAR and glutamate. The HisF subunit catalyzes the cyclization activity that produces IGP and AICAR from PRFAR using the ammonia provided by the HisH subunit. This is Imidazole glycerol phosphate synthase subunit HisF from Polaromonas naphthalenivorans (strain CJ2).